A 78-amino-acid polypeptide reads, in one-letter code: Translational regulator CsrA (78 aa).

It belongs to the CsrA/RsmA family. In terms of assembly, homodimer; the beta-strands of each monomer intercalate to form a hydrophobic core, while the alpha-helices form wings that extend away from the core.

It localises to the cytoplasm. Functionally, a translational regulator that binds mRNA to regulate translation initiation and/or mRNA stability. Usually binds in the 5'-UTR at or near the Shine-Dalgarno sequence preventing ribosome-binding, thus repressing translation. Its main target seems to be the major flagellin gene, while its function is anatagonized by FliW. The protein is Translational regulator CsrA of Natranaerobius thermophilus (strain ATCC BAA-1301 / DSM 18059 / JW/NM-WN-LF).